The primary structure comprises 424 residues: Serine--tRNA ligase (424 aa).

The tract at residues 109–129 (QEDVPYGESEEDNREERKWGD) is disordered. Position 231 to 233 (231 to 233 (TAE)) interacts with L-serine. ATP is bound at residue 262–264 (RSE). Glutamate 285 contributes to the L-serine binding site. 349 to 352 (EISS) contacts ATP. Serine 385 is an L-serine binding site.

Belongs to the class-II aminoacyl-tRNA synthetase family. Type-1 seryl-tRNA synthetase subfamily. As to quaternary structure, homodimer. The tRNA molecule binds across the dimer.

The protein localises to the cytoplasm. It carries out the reaction tRNA(Ser) + L-serine + ATP = L-seryl-tRNA(Ser) + AMP + diphosphate + H(+). The catalysed reaction is tRNA(Sec) + L-serine + ATP = L-seryl-tRNA(Sec) + AMP + diphosphate + H(+). It participates in aminoacyl-tRNA biosynthesis; selenocysteinyl-tRNA(Sec) biosynthesis; L-seryl-tRNA(Sec) from L-serine and tRNA(Sec): step 1/1. Catalyzes the attachment of serine to tRNA(Ser). Is also able to aminoacylate tRNA(Sec) with serine, to form the misacylated tRNA L-seryl-tRNA(Sec), which will be further converted into selenocysteinyl-tRNA(Sec). The sequence is that of Serine--tRNA ligase from Shouchella clausii (strain KSM-K16) (Alkalihalobacillus clausii).